The primary structure comprises 116 residues: Nascent polypeptide-associated complex protein (116 aa).

An NAC-A/B domain is found at 6–70 (PKQMKDLERM…AREESKQQQK (65 aa)).

It belongs to the NAC-alpha family. As to quaternary structure, homodimer. Interacts with the ribosome. Binds ribosomal RNA.

Contacts the emerging nascent chain on the ribosome. The polypeptide is Nascent polypeptide-associated complex protein (Sulfolobus acidocaldarius (strain ATCC 33909 / DSM 639 / JCM 8929 / NBRC 15157 / NCIMB 11770)).